The chain runs to 305 residues: Sulfate adenylyltransferase subunit 2 (305 aa).

Belongs to the PAPS reductase family. CysD subfamily. Heterodimer composed of CysD, the smaller subunit, and CysN.

The enzyme catalyses sulfate + ATP + H(+) = adenosine 5'-phosphosulfate + diphosphate. The protein operates within sulfur metabolism; hydrogen sulfide biosynthesis; sulfite from sulfate: step 1/3. With CysN forms the ATP sulfurylase (ATPS) that catalyzes the adenylation of sulfate producing adenosine 5'-phosphosulfate (APS) and diphosphate, the first enzymatic step in sulfur assimilation pathway. APS synthesis involves the formation of a high-energy phosphoric-sulfuric acid anhydride bond driven by GTP hydrolysis by CysN coupled to ATP hydrolysis by CysD. This chain is Sulfate adenylyltransferase subunit 2, found in Azotobacter vinelandii (strain DJ / ATCC BAA-1303).